Here is a 459-residue protein sequence, read N- to C-terminus: NADH-ubiquinone oxidoreductase chain 4 (459 aa).

Transmembrane regions (helical) follow at residues 20–42, 61–81, 103–123, 148–168, 194–214, 224–244, 257–277, 284–303, 307–329, 350–370, 392–414, and 435–455; these read PKWLWSATTTHSLIIASLSLTLF, MISTPLIILTCWLLPLMIIAS, LQALLIMAFSATEIILFYIMF, IYFLFYTLAGSLPLLVALLYL, FLWVACVTAFLVKMPLYGVHL, PVAGSMILAAILLKLGGYGMI, LAYPFIILALWGIIMTGSICM, SLIAYSSVSHMGLVASGILI, WGFTGAIILMIAHGLTSSALFCL, IILPLMATWWFIMSLANMALP, TILLTGTGTLITASYSLYLYMSS, and LLLTLHIIPIILLMIKPELIW.

This sequence belongs to the complex I subunit 4 family.

It is found in the mitochondrion membrane. The catalysed reaction is a ubiquinone + NADH + 5 H(+)(in) = a ubiquinol + NAD(+) + 4 H(+)(out). In terms of biological role, core subunit of the mitochondrial membrane respiratory chain NADH dehydrogenase (Complex I) that is believed to belong to the minimal assembly required for catalysis. Complex I functions in the transfer of electrons from NADH to the respiratory chain. The immediate electron acceptor for the enzyme is believed to be ubiquinone. The chain is NADH-ubiquinone oxidoreductase chain 4 (MT-ND4) from Polypterus ornatipinnis (Ornate bichir).